The chain runs to 612 residues: Phragmoplastin DRP1D (612 aa).

M1 bears the N-acetylmethionine mark. Residues 32-301 form the Dynamin-type G domain; it reads WEALPSVAVV…LESVIRSRIP (270 aa). The G1 motif stretch occupies residues 42–49; that stretch reads GGQSSGKS. 45-50 contacts GTP; that stretch reads SSGKSS. The G2 motif stretch occupies residues 68-70; the sequence is VTR. The segment at 143–146 is G3 motif; that stretch reads DLPG. Residues 212–215 are G4 motif; sequence TKLD. GTP-binding positions include 213–218 and 243–246; these read KLDLMD and NRSQ. Residues 242 to 245 form a G5 motif region; it reads VNRS. Positions 520–612 constitute a GED domain; it reads FRKIASNVAA…DEIDAAVWVR (93 aa).

It belongs to the TRAFAC class dynamin-like GTPase superfamily. Dynamin/Fzo/YdjA family. Forms homodimer and may homooligomerize and heterooligomerize to form the phragmoplastin complex. Binds to PHIP1.

The protein localises to the cytoplasm. Its subcellular location is the cytoskeleton. The enzyme catalyses GTP + H2O = GDP + phosphate + H(+). Putative microtubule-associated force-producing protein. Has a GTPase activity. The chain is Phragmoplastin DRP1D from Arabidopsis thaliana (Mouse-ear cress).